Reading from the N-terminus, the 239-residue chain is Ribosomal RNA small subunit methyltransferase G (239 aa).

Residues glycine 77, phenylalanine 82, 128–129 (AE), and arginine 147 contribute to the S-adenosyl-L-methionine site. The interval 216-239 (EKKKQTPKKYPRKPGTPNKSPIEG) is disordered.

Belongs to the methyltransferase superfamily. RNA methyltransferase RsmG family.

The protein resides in the cytoplasm. Specifically methylates the N7 position of guanine in position 535 of 16S rRNA. The chain is Ribosomal RNA small subunit methyltransferase G from Bacillus pumilus (strain SAFR-032).